Here is a 458-residue protein sequence, read N- to C-terminus: UDP-N-acetylmuramoylalanine--D-glutamate ligase (458 aa).

ATP is bound at residue 124–130 (GSDGKTT).

Belongs to the MurCDEF family.

It localises to the cytoplasm. It carries out the reaction UDP-N-acetyl-alpha-D-muramoyl-L-alanine + D-glutamate + ATP = UDP-N-acetyl-alpha-D-muramoyl-L-alanyl-D-glutamate + ADP + phosphate + H(+). Its pathway is cell wall biogenesis; peptidoglycan biosynthesis. In terms of biological role, cell wall formation. Catalyzes the addition of glutamate to the nucleotide precursor UDP-N-acetylmuramoyl-L-alanine (UMA). This is UDP-N-acetylmuramoylalanine--D-glutamate ligase from Clostridium kluyveri (strain NBRC 12016).